Reading from the N-terminus, the 585-residue chain is Protein DENND6B (585 aa).

The segment covering 1–10 has biased composition (low complexity); it reads MEVPVGPGPR. The segment at 1–25 is disordered; it reads MEVPVGPGPRQAGGGLGATRSSSSG. Residues 43 to 221 form the uDENN domain; sequence ECVCVVTFDL…IQVRIPSRVD (179 aa). The region spanning 246–373 is the cDENN domain; sequence VHELDLFRCF…VKLKKPSRLK (128 aa). The dDENN domain maps to 375–499; that stretch reads LDTKPGLYTS…KSPHFDGWYR (125 aa).

The protein belongs to the DENND6 family.

The protein resides in the recycling endosome. Its subcellular location is the cytoplasm. Its function is as follows. Guanine nucleotide exchange factor (GEF) for RAB14. Also has some, lesser GEF activity towards RAB35. This is Protein DENND6B (Dennd6b) from Mus musculus (Mouse).